The sequence spans 79 residues: Conotoxin ArMSGL-0121 (79 aa).

Positions 1–20 are cleaved as a signal peptide; the sequence is MSRLGIMVLTLLLLVFIVTS. Positions 21–44 are excised as a propeptide; it reads HQDAGEKQATQRNAINFRWRRSFT. 3 disulfide bridges follow: Cys-52/Cys-64, Cys-56/Cys-73, and Cys-63/Cys-77. Residue Leu-78 is modified to Leucine amide.

Belongs to the conotoxin O3 superfamily. Expressed by the venom duct.

It is found in the secreted. This Conus arenatus (Sand-dusted cone) protein is Conotoxin ArMSGL-0121.